The primary structure comprises 295 residues: ATP synthase gamma chain (295 aa).

Belongs to the ATPase gamma chain family. F-type ATPases have 2 components, CF(1) - the catalytic core - and CF(0) - the membrane proton channel. CF(1) has five subunits: alpha(3), beta(3), gamma(1), delta(1), epsilon(1). CF(0) has three main subunits: a, b and c.

Its subcellular location is the cell inner membrane. Its function is as follows. Produces ATP from ADP in the presence of a proton gradient across the membrane. The gamma chain is believed to be important in regulating ATPase activity and the flow of protons through the CF(0) complex. In Campylobacter fetus subsp. fetus (strain 82-40), this protein is ATP synthase gamma chain.